A 399-amino-acid polypeptide reads, in one-letter code: Methylthioribose kinase (399 aa).

Residues Asn-40, Lys-57, and 111-113 (EDL) contribute to the ATP site. A substrate-binding site is contributed by Asp-229. ATP is bound at residue 246–248 (DAE). Residue Arg-344 participates in substrate binding.

Belongs to the methylthioribose kinase family. As to quaternary structure, homodimer.

It carries out the reaction 5-(methylsulfanyl)-D-ribose + ATP = 5-(methylsulfanyl)-alpha-D-ribose 1-phosphate + ADP + H(+). It functions in the pathway amino-acid biosynthesis; L-methionine biosynthesis via salvage pathway; S-methyl-5-thio-alpha-D-ribose 1-phosphate from S-methyl-5'-thioadenosine (hydrolase route): step 2/2. Functionally, catalyzes the phosphorylation of methylthioribose into methylthioribose-1-phosphate. The protein is Methylthioribose kinase of Cronobacter sakazakii (strain ATCC BAA-894) (Enterobacter sakazakii).